The sequence spans 241 residues: Thyroid transcription factor 1-associated protein 26 (241 aa).

Disordered stretches follow at residues M1–V22 and K182–K205. The span at K186–R202 shows a compositional bias: basic and acidic residues.

Belongs to the TAP26 family. As to quaternary structure, interacts with NKX2-1. Ubiquitously expressed. In lung, expression is restricted to the alveolar epithelial cells.

It is found in the nucleus. Its function is as follows. Component of the transcription complexes of the pulmonary surfactant-associated protein-B (SFTPB) and -C (SFTPC). Enhances homeobox protein Nkx-2.1-activated SFTPB and SFTPC promoter activities. The protein is Thyroid transcription factor 1-associated protein 26 (CCDC59) of Homo sapiens (Human).